A 335-amino-acid polypeptide reads, in one-letter code: Glycerol-3-phosphate dehydrogenase [NAD(P)+] (335 aa).

Residues W15, R36, and K109 each coordinate NADPH. Positions 109, 137, and 139 each coordinate sn-glycerol 3-phosphate. A141 contacts NADPH. Positions 192, 245, 255, 256, and 257 each coordinate sn-glycerol 3-phosphate. K192 serves as the catalytic Proton acceptor. Position 256 (R256) interacts with NADPH. L279 and E281 together coordinate NADPH.

The protein belongs to the NAD-dependent glycerol-3-phosphate dehydrogenase family.

Its subcellular location is the cytoplasm. The enzyme catalyses sn-glycerol 3-phosphate + NAD(+) = dihydroxyacetone phosphate + NADH + H(+). It carries out the reaction sn-glycerol 3-phosphate + NADP(+) = dihydroxyacetone phosphate + NADPH + H(+). The protein operates within membrane lipid metabolism; glycerophospholipid metabolism. In terms of biological role, catalyzes the reduction of the glycolytic intermediate dihydroxyacetone phosphate (DHAP) to sn-glycerol 3-phosphate (G3P), the key precursor for phospholipid synthesis. This Beijerinckia indica subsp. indica (strain ATCC 9039 / DSM 1715 / NCIMB 8712) protein is Glycerol-3-phosphate dehydrogenase [NAD(P)+].